Reading from the N-terminus, the 448-residue chain is Phosphoglucosamine mutase (448 aa).

Serine 100 functions as the Phosphoserine intermediate in the catalytic mechanism. Mg(2+) is bound by residues serine 100, aspartate 240, aspartate 242, and aspartate 244. Serine 100 is subject to Phosphoserine.

It belongs to the phosphohexose mutase family. It depends on Mg(2+) as a cofactor. Activated by phosphorylation.

It carries out the reaction alpha-D-glucosamine 1-phosphate = D-glucosamine 6-phosphate. Functionally, catalyzes the conversion of glucosamine-6-phosphate to glucosamine-1-phosphate. This is Phosphoglucosamine mutase from Clostridium acetobutylicum (strain ATCC 824 / DSM 792 / JCM 1419 / IAM 19013 / LMG 5710 / NBRC 13948 / NRRL B-527 / VKM B-1787 / 2291 / W).